A 145-amino-acid polypeptide reads, in one-letter code: Venom protein 30.1 (145 aa).

Positions 1 to 18 (MIIVKLFTCLLMVSSVLT) are cleaved as a signal peptide.

In terms of processing, contains 5 disulfide bonds. In terms of tissue distribution, expressed by the venom gland.

It localises to the secreted. The sequence is that of Venom protein 30.1 from Lychas mucronatus (Chinese swimming scorpion).